A 169-amino-acid polypeptide reads, in one-letter code: Inorganic pyrophosphatase (169 aa).

Met1 bears the N-formylmethionine mark. Substrate contacts are provided by Lys28, Arg42, and Tyr54. 3 residues coordinate Mg(2+): Asp64, Asp69, and Asp101. Tyr138 contacts substrate.

Belongs to the PPase family. In terms of assembly, homohexamer. Requires Mg(2+) as cofactor.

Its subcellular location is the cytoplasm. The enzyme catalyses diphosphate + H2O = 2 phosphate + H(+). Its function is as follows. Catalyzes the hydrolysis of inorganic pyrophosphate (PPi) forming two phosphate ions. The protein is Inorganic pyrophosphatase of Nostoc sp. (strain PCC 7120 / SAG 25.82 / UTEX 2576).